A 176-amino-acid polypeptide reads, in one-letter code: NADH-quinone oxidoreductase subunit B 1 (176 aa).

[4Fe-4S] cluster-binding residues include C55, C56, C120, and C150.

Belongs to the complex I 20 kDa subunit family. As to quaternary structure, NDH-1 is composed of 14 different subunits. Subunits NuoB, C, D, E, F, and G constitute the peripheral sector of the complex. It depends on [4Fe-4S] cluster as a cofactor.

It is found in the cell inner membrane. It carries out the reaction a quinone + NADH + 5 H(+)(in) = a quinol + NAD(+) + 4 H(+)(out). NDH-1 shuttles electrons from NADH, via FMN and iron-sulfur (Fe-S) centers, to quinones in the respiratory chain. Couples the redox reaction to proton translocation (for every two electrons transferred, four hydrogen ions are translocated across the cytoplasmic membrane), and thus conserves the redox energy in a proton gradient. The sequence is that of NADH-quinone oxidoreductase subunit B 1 from Cereibacter sphaeroides (strain ATCC 17029 / ATH 2.4.9) (Rhodobacter sphaeroides).